Consider the following 89-residue polypeptide: Small ribosomal subunit protein uS15 (89 aa).

Residues 1–25 (MSLDTTEKQQLINTHQTHGTDTGSA) form a disordered region. The segment covering 8 to 25 (KQQLINTHQTHGTDTGSA) has biased composition (polar residues).

This sequence belongs to the universal ribosomal protein uS15 family. Part of the 30S ribosomal subunit. Forms a bridge to the 50S subunit in the 70S ribosome, contacting the 23S rRNA.

Functionally, one of the primary rRNA binding proteins, it binds directly to 16S rRNA where it helps nucleate assembly of the platform of the 30S subunit by binding and bridging several RNA helices of the 16S rRNA. Forms an intersubunit bridge (bridge B4) with the 23S rRNA of the 50S subunit in the ribosome. The chain is Small ribosomal subunit protein uS15 from Synechococcus sp. (strain CC9605).